The chain runs to 161 residues: Protein-export protein SecB (161 aa).

The protein belongs to the SecB family. Homotetramer, a dimer of dimers. One homotetramer interacts with 1 SecA dimer.

Its subcellular location is the cytoplasm. One of the proteins required for the normal export of preproteins out of the cell cytoplasm. It is a molecular chaperone that binds to a subset of precursor proteins, maintaining them in a translocation-competent state. It also specifically binds to its receptor SecA. This is Protein-export protein SecB from Shewanella putrefaciens (strain CN-32 / ATCC BAA-453).